Consider the following 613-residue polypeptide: WD40 repeat-containing protein HOS15 (613 aa).

Positions Thr-5–Lys-37 constitute a LisH domain. Disordered stretches follow at residues Lys-101 to Met-174 and Glu-193 to Gly-214. 8 WD repeats span residues Gly-263–Val-302, Glu-322–Ser-362, Lys-363–Gln-402, Phe-405–Thr-443, Gly-446–Asp-485, Glu-488–Ser-536, Gly-539–Thr-580, and Asn-582–Met-613.

It localises to the nucleus. Its function is as follows. Acts as a repressor of cold stress-regulated gene expression. Interacts specifically with and promotes deacetylation of histone H4. Plays a role in gene regulation for plant acclimation and tolerance to cold stress. The sequence is that of WD40 repeat-containing protein HOS15 from Arabidopsis thaliana (Mouse-ear cress).